We begin with the raw amino-acid sequence, 204 residues long: Guanylate kinase (204 aa).

In terms of domain architecture, Guanylate kinase-like spans 5 to 184 (GLLLVLSGPS…AVNHIKAIVD (180 aa)). 12–19 (GPSGVGKG) serves as a coordination point for ATP.

This sequence belongs to the guanylate kinase family.

The protein localises to the cytoplasm. The enzyme catalyses GMP + ATP = GDP + ADP. Functionally, essential for recycling GMP and indirectly, cGMP. The polypeptide is Guanylate kinase (Lactobacillus delbrueckii subsp. bulgaricus (strain ATCC 11842 / DSM 20081 / BCRC 10696 / JCM 1002 / NBRC 13953 / NCIMB 11778 / NCTC 12712 / WDCM 00102 / Lb 14)).